The chain runs to 502 residues: UPF0371 protein CLJ_B0384 (502 aa).

The protein belongs to the UPF0371 family.

This chain is UPF0371 protein CLJ_B0384, found in Clostridium botulinum (strain 657 / Type Ba4).